Here is a 152-residue protein sequence, read N- to C-terminus: uncharacterized protein (152 aa).

It is found in the mitochondrion. This is an uncharacterized protein from Arabidopsis thaliana (Mouse-ear cress).